The sequence spans 507 residues: Xaa-Pro aminopeptidase 3 (507 aa).

Residues 1 to 31 constitute a mitochondrion transit peptide; sequence MPWLLSAPKLVPAVANVRGLSGCMLCSQRRY. Residues 54-79 are interaction with TNFRSF1B; it reads HPHLLRPGEVTPGLSQVEYALRRHKL. Residues Y300, D331, D342, H424, H431, E451, and E475 each contribute to the substrate site. Residues D331, D342, and H424 each coordinate Mn(2+). E451 and E475 together coordinate Mn(2+).

It belongs to the peptidase M24B family. Homodimer. Isoform 1 interacts with TNFRSF1B/TNFR2 (activated) and TRAF2. Mn(2+) serves as cofactor. Isoform 1 and isoform 2 are widely expressed, with isoform 1 being more abundant.

The protein resides in the mitochondrion. Its subcellular location is the cytoplasm. The enzyme catalyses Release of any N-terminal amino acid, including proline, that is linked to proline, even from a dipeptide or tripeptide.. In terms of biological role, catalyzes the removal of a penultimate prolyl residue from the N-termini of peptides, such as Leu-Pro-Ala. Also shows low activity towards peptides with Ala or Ser at the P1 position. Functionally, promotes TNFRSF1B-mediated phosphorylation of MAPK8/JNK1 and MAPK9/JNK2, suggesting a function as an adapter protein for TNFRSF1B; the effect is independent of XPNPEP3 peptidase activity. May inhibit apoptotic cell death induced via TNF-TNFRSF1B signaling. This chain is Xaa-Pro aminopeptidase 3 (XPNPEP3), found in Homo sapiens (Human).